Here is a 187-residue protein sequence, read N- to C-terminus: Large ribosomal subunit protein uL6 (187 aa).

The protein belongs to the universal ribosomal protein uL6 family. In terms of assembly, part of the 50S ribosomal subunit.

In terms of biological role, this protein binds to the 23S rRNA, and is important in its secondary structure. It is located near the subunit interface in the base of the L7/L12 stalk, and near the tRNA binding site of the peptidyltransferase center. This is Large ribosomal subunit protein uL6 from Chloroflexus aggregans (strain MD-66 / DSM 9485).